The chain runs to 166 residues: NADH-quinone oxidoreductase subunit I (166 aa).

4Fe-4S ferredoxin-type domains are found at residues 57 to 87 and 97 to 126; these read LRRYPNGEERCIACKLCEAVCPALAITIESE and TRYDIDMFKCINCGLCEESCPVDSIVVTPI. Positions 67, 70, 73, 77, 106, 109, 112, and 116 each coordinate [4Fe-4S] cluster.

Belongs to the complex I 23 kDa subunit family. In terms of assembly, NDH-1 is composed of 14 different subunits. Subunits NuoA, H, J, K, L, M, N constitute the membrane sector of the complex. The cofactor is [4Fe-4S] cluster.

It is found in the cell inner membrane. It carries out the reaction a quinone + NADH + 5 H(+)(in) = a quinol + NAD(+) + 4 H(+)(out). Its function is as follows. NDH-1 shuttles electrons from NADH, via FMN and iron-sulfur (Fe-S) centers, to quinones in the respiratory chain. The immediate electron acceptor for the enzyme in this species is believed to be ubiquinone. Couples the redox reaction to proton translocation (for every two electrons transferred, four hydrogen ions are translocated across the cytoplasmic membrane), and thus conserves the redox energy in a proton gradient. The polypeptide is NADH-quinone oxidoreductase subunit I (Legionella pneumophila (strain Paris)).